The sequence spans 431 residues: Argininosuccinate lyase (431 aa).

It belongs to the lyase 1 family. Argininosuccinate lyase subfamily.

The protein localises to the cytoplasm. It catalyses the reaction 2-(N(omega)-L-arginino)succinate = fumarate + L-arginine. It participates in amino-acid biosynthesis; L-arginine biosynthesis; L-arginine from L-ornithine and carbamoyl phosphate: step 3/3. The protein is Argininosuccinate lyase of Xanthomonas oryzae pv. oryzae (strain MAFF 311018).